Consider the following 464-residue polypeptide: tRNA modification GTPase MnmE (464 aa).

(6S)-5-formyl-5,6,7,8-tetrahydrofolate is bound by residues R25, E87, and K130. The TrmE-type G domain occupies 226–386 (GLSVVLAGQP…LREELLRIAG (161 aa)). N236 is a K(+) binding site. GTP contacts are provided by residues 236-241 (NVGKSS), 255-261 (TPIAGTT), and 280-283 (DTAG). S240 is a binding site for Mg(2+). Residues T255, I257, and T260 each coordinate K(+). Position 261 (T261) interacts with Mg(2+). Residue K464 coordinates (6S)-5-formyl-5,6,7,8-tetrahydrofolate.

This sequence belongs to the TRAFAC class TrmE-Era-EngA-EngB-Septin-like GTPase superfamily. TrmE GTPase family. In terms of assembly, homodimer. Heterotetramer of two MnmE and two MnmG subunits. K(+) serves as cofactor.

The protein localises to the cytoplasm. Functionally, exhibits a very high intrinsic GTPase hydrolysis rate. Involved in the addition of a carboxymethylaminomethyl (cmnm) group at the wobble position (U34) of certain tRNAs, forming tRNA-cmnm(5)s(2)U34. The chain is tRNA modification GTPase MnmE from Paraburkholderia xenovorans (strain LB400).